The sequence spans 302 residues: ATP synthase gamma chain (302 aa).

It belongs to the ATPase gamma chain family. As to quaternary structure, F-type ATPases have 2 components, CF(1) - the catalytic core - and CF(0) - the membrane proton channel. CF(1) has five subunits: alpha(3), beta(3), gamma(1), delta(1), epsilon(1). CF(0) has three main subunits: a, b and c.

It is found in the cell membrane. Functionally, produces ATP from ADP in the presence of a proton gradient across the membrane. The gamma chain is believed to be important in regulating ATPase activity and the flow of protons through the CF(0) complex. The sequence is that of ATP synthase gamma chain from Leuconostoc citreum (strain KM20).